An 85-amino-acid chain; its full sequence is ATP synthase subunit c (85 aa).

2 helical membrane passes run 20–40 (LGAGIAVFALAGVGMGLGNIF) and 65–85 (FALTEAVALFALLIAFLILFA).

The protein belongs to the ATPase C chain family. F-type ATPases have 2 components, F(1) - the catalytic core - and F(0) - the membrane proton channel. F(1) has five subunits: alpha(3), beta(3), gamma(1), delta(1), epsilon(1). F(0) has three main subunits: a(1), b(2) and c(10-14). The alpha and beta chains form an alternating ring which encloses part of the gamma chain. F(1) is attached to F(0) by a central stalk formed by the gamma and epsilon chains, while a peripheral stalk is formed by the delta and b chains.

Its subcellular location is the cell inner membrane. Functionally, f(1)F(0) ATP synthase produces ATP from ADP in the presence of a proton or sodium gradient. F-type ATPases consist of two structural domains, F(1) containing the extramembraneous catalytic core and F(0) containing the membrane proton channel, linked together by a central stalk and a peripheral stalk. During catalysis, ATP synthesis in the catalytic domain of F(1) is coupled via a rotary mechanism of the central stalk subunits to proton translocation. Key component of the F(0) channel; it plays a direct role in translocation across the membrane. A homomeric c-ring of between 10-14 subunits forms the central stalk rotor element with the F(1) delta and epsilon subunits. This is ATP synthase subunit c from Gluconobacter oxydans (strain 621H) (Gluconobacter suboxydans).